The chain runs to 787 residues: Probable phosphoketolase (787 aa).

This sequence belongs to the XFP family. Thiamine diphosphate is required as a cofactor.

This Pediococcus pentosaceus (strain ATCC 25745 / CCUG 21536 / LMG 10740 / 183-1w) protein is Probable phosphoketolase.